Reading from the N-terminus, the 118-residue chain is MEKTLATSHTKRSSPPSPSSAVNTSSTGFNRRTRQRLSDATASVSETDVEDEDEDEEGVEEKIEALQTIVPGGTELGVDALFEETASYILALQCQINAIKVLTTFLERCEKKDMKFGG.

Positions 1 to 59 (MEKTLATSHTKRSSPPSPSSAVNTSSTGFNRRTRQRLSDATASVSETDVEDEDEDEEGV) are disordered. Polar residues predominate over residues 19–30 (SSAVNTSSTGFN). The bHLH domain maps to 43 to 92 (SVSETDVEDEDEDEEGVEEKIEALQTIVPGGTELGVDALFEETASYILAL). Acidic residues predominate over residues 47 to 59 (TDVEDEDEDEEGV).

This sequence belongs to the bHLH protein family. Homodimer.

The protein resides in the nucleus. In terms of biological role, atypical bHLH transcription factor that acts as a negative regulator of a variety of shade avoidance syndrome (SAS) responses, including seedling elongation and photosynthetic pigment accumulation. Acts as a direct transcriptional repressor of two auxin-responsive genes, SAUR15 and SAUR68. May function in integrating shade and hormone transcriptional networks in response to light and auxin changes. The polypeptide is Transcription factor PAR2 (PAR2) (Arabidopsis thaliana (Mouse-ear cress)).